The primary structure comprises 198 residues: NADH-quinone oxidoreductase subunit C (198 aa).

It belongs to the complex I 30 kDa subunit family. As to quaternary structure, NDH-1 is composed of 14 different subunits. Subunits NuoB, C, D, E, F, and G constitute the peripheral sector of the complex.

The protein resides in the cell inner membrane. It catalyses the reaction a quinone + NADH + 5 H(+)(in) = a quinol + NAD(+) + 4 H(+)(out). Functionally, NDH-1 shuttles electrons from NADH, via FMN and iron-sulfur (Fe-S) centers, to quinones in the respiratory chain. The immediate electron acceptor for the enzyme in this species is believed to be ubiquinone. Couples the redox reaction to proton translocation (for every two electrons transferred, four hydrogen ions are translocated across the cytoplasmic membrane), and thus conserves the redox energy in a proton gradient. The sequence is that of NADH-quinone oxidoreductase subunit C from Herminiimonas arsenicoxydans.